Here is a 261-residue protein sequence, read N- to C-terminus: Putative ketoacyl reductase (261 aa).

Residues Thr-15, Ser-16, Ile-18, Arg-38, Gly-39, Asp-63, Val-64, Asn-90, Tyr-157, Lys-161, Val-190, and Thr-192 each contribute to the NADP(+) site. The active-site Proton acceptor is Tyr-157.

The protein belongs to the short-chain dehydrogenases/reductases (SDR) family. As to quaternary structure, homotetramer.

It functions in the pathway antibiotic biosynthesis; actinorhodin biosynthesis. This chain is Putative ketoacyl reductase (actIII), found in Streptomyces coelicolor (strain ATCC BAA-471 / A3(2) / M145).